We begin with the raw amino-acid sequence, 353 residues long: Photosystem II D2 protein (353 aa).

Position 2 is an N-acetylthreonine (T2). Position 2 is a phosphothreonine (T2). A helical transmembrane segment spans residues 41 to 61 (CAYFSLGGWLTGTTFVTSWYT). Position 118 (H118) interacts with chlorophyll a. Residues 125–141 (GFMLRQFELARSVQLRP) form a helical membrane-spanning segment. Positions 130 and 143 each coordinate pheophytin a. Residues 153 to 166 (VFVSVFLIYPLGQS) traverse the membrane as a helical segment. H198 serves as a coordination point for chlorophyll a. A helical membrane pass occupies residues 208–228 (AALLCAIHGATVENTLFEDGD). Residues H215 and F262 each contribute to the a plastoquinone site. H215 is a binding site for Fe cation. H269 lines the Fe cation pocket. A helical transmembrane segment spans residues 279–295 (GLWMSAIGVVGLALNLR).

The protein belongs to the reaction center PufL/M/PsbA/D family. In terms of assembly, PSII is composed of 1 copy each of membrane proteins PsbA, PsbB, PsbC, PsbD, PsbE, PsbF, PsbH, PsbI, PsbJ, PsbK, PsbL, PsbM, PsbT, PsbX, PsbY, PsbZ, Psb30/Ycf12, at least 3 peripheral proteins of the oxygen-evolving complex and a large number of cofactors. It forms dimeric complexes. The D1/D2 heterodimer binds P680, chlorophylls that are the primary electron donor of PSII, and subsequent electron acceptors. It shares a non-heme iron and each subunit binds pheophytin, quinone, additional chlorophylls, carotenoids and lipids. There is also a Cl(-1) ion associated with D1 and D2, which is required for oxygen evolution. The PSII complex binds additional chlorophylls, carotenoids and specific lipids. serves as cofactor.

The protein resides in the plastid. Its subcellular location is the chloroplast thylakoid membrane. It carries out the reaction 2 a plastoquinone + 4 hnu + 2 H2O = 2 a plastoquinol + O2. In terms of biological role, photosystem II (PSII) is a light-driven water:plastoquinone oxidoreductase that uses light energy to abstract electrons from H(2)O, generating O(2) and a proton gradient subsequently used for ATP formation. It consists of a core antenna complex that captures photons, and an electron transfer chain that converts photonic excitation into a charge separation. The D1/D2 (PsbA/PsbD) reaction center heterodimer binds P680, the primary electron donor of PSII as well as several subsequent electron acceptors. D2 is needed for assembly of a stable PSII complex. The protein is Photosystem II D2 protein of Chara vulgaris (Common stonewort).